The chain runs to 37 residues: MKIRASVRKICEKCRLIRRQGRIIVICSNPRHKQRQG.

Belongs to the bacterial ribosomal protein bL36 family.

It is found in the plastid. The protein localises to the chloroplast. This is Large ribosomal subunit protein bL36c from Phalaenopsis aphrodite subsp. formosana (Moth orchid).